The sequence spans 4076 residues: E3 ubiquitin-protein ligase TOM1-like (4076 aa).

Low complexity predominate over residues 225–237 (SSAAPAVSAGSTA). 17 disordered regions span residues 225 to 256 (SSAAPAVSAGSTAKAKDKEKEKEKATGPKNVA), 288 to 360 (YPDT…RDGP), 748 to 819 (IPAE…ILPS), 921 to 970 (LEAP…NKPA), 1083 to 1103 (SPVQDEEPASEKRTPDVSSGT), 1571 to 1646 (MALD…ITRE), 1988 to 2041 (PADA…KRPI), 2067 to 2110 (NVPA…KLAK), 2275 to 2295 (EGDKDSRPNNPRGTDPSIGRS), 2356 to 2551 (SGTA…ELDY), 2581 to 2634 (GDDL…LLAP), 2782 to 2817 (IPIPPPHSRESRPTEARRDTYQEPHQAVQFSPESTH), 2858 to 2955 (EKAR…QAED), 3037 to 3066 (EQHEQRRRERQNAAGGQDLGPADMDPASIL), 3105 to 3132 (RQLHAQQGGQAASRSRDAQRPTEAGAGT), 3216 to 3241 (KQLKEKDAKTPHPLKRSLTGGTNNNG), and 3353 to 3444 (EEQA…QLTP). The span at 238 to 250 (KAKDKEKEKEKAT) shows a compositional bias: basic and acidic residues. Residues 311 to 320 (TTSSPAAPTP) are compositionally biased toward low complexity. Residues 322–343 (RRSSTMNVSQSSRTQRVGSSEE) are compositionally biased toward polar residues. The span at 767 to 778 (EGNDADDDSEDD) shows a compositional bias: acidic residues. A compositionally biased stretch (basic and acidic residues) spans 940-950 (VKGKGKEKATD). A compositionally biased stretch (polar residues) spans 959–969 (ASSSSSGNNKP). Polar residues predominate over residues 1606 to 1620 (PGTSRETNVGASTTA). Residues 1621-1632 (PQQLPVLPSQQP) show a composition bias toward low complexity. A compositionally biased stretch (polar residues) spans 1633-1642 (ATESQSNTPR). Over residues 2021–2041 (VTDKDMHDAPKNPAQDLKRPI) the composition is skewed to basic and acidic residues. The span at 2086 to 2096 (NEATPSPSGDE) shows a compositional bias: polar residues. A compositionally biased stretch (basic and acidic residues) spans 2099–2110 (SESKEKEKKLAK). Composition is skewed to acidic residues over residues 2378 to 2387 (DLTDDREETP) and 2405 to 2450 (EFSD…DLGE). A compositionally biased stretch (low complexity) spans 2460–2469 (QPGVVEVLMG). Composition is skewed to acidic residues over residues 2470 to 2516 (ENDD…DLED) and 2523 to 2551 (EEGNAIDDDGASWDDGTDEDEEDEEELDY). Basic and acidic residues predominate over residues 2587-2597 (EPIRDFDGHYI). A compositionally biased stretch (acidic residues) spans 2598 to 2622 (DDDEDGEEDDDEDEGEDDMDDDMYF). Composition is skewed to basic and acidic residues over residues 2788–2803 (HSRESRPTEARRDTYQ) and 2858–2912 (EKAR…ERAE). Residues 2851-2929 (AIQAEKEEKA…QAAADQEANA (79 aa)) adopt a coiled-coil conformation. Over residues 2913 to 2927 (AAAQAAAQAAADQEA) the composition is skewed to low complexity. Residues 3037–3047 (EQHEQRRRERQ) are compositionally biased toward basic and acidic residues. Over residues 3108–3117 (HAQQGGQAAS) the composition is skewed to polar residues. The stretch at 3341-3375 (PLQAIERRRKEAEEQAKKKKEAEEKAATEREAANA) forms a coiled coil. The segment covering 3353-3372 (EEQAKKKKEAEEKAATEREA) has biased composition (basic and acidic residues). The segment covering 3373 to 3414 (ANAPEEQASTSTEQTPAQQEATQQPSESTPAAASGQQPAQQD) has biased composition (low complexity). Basic and acidic residues predominate over residues 3415 to 3439 (QENKELEAPKEKADEKDVQSDEKKI). The region spanning 3740–4076 (KADELKFGKL…TAGSDYFGFA (337 aa)) is the HECT domain. Catalysis depends on Cys4043, which acts as the Glycyl thioester intermediate.

It belongs to the UPL family. TOM1/PTR1 subfamily.

Its subcellular location is the nucleus. The enzyme catalyses S-ubiquitinyl-[E2 ubiquitin-conjugating enzyme]-L-cysteine + [acceptor protein]-L-lysine = [E2 ubiquitin-conjugating enzyme]-L-cysteine + N(6)-ubiquitinyl-[acceptor protein]-L-lysine.. It participates in protein modification; protein ubiquitination. Functionally, probable ubiquitin ligase protein, which may be involved in mRNA export. E3 ubiquitin ligase proteins mediate ubiquitination and subsequent proteasomal degradation of target proteins. Participates in mRNA export from the nucleus by regulating the transport of hnRNP proteins. The protein is E3 ubiquitin-protein ligase TOM1-like of Neurospora crassa (strain ATCC 24698 / 74-OR23-1A / CBS 708.71 / DSM 1257 / FGSC 987).